Consider the following 306-residue polypeptide: Agmatinase (306 aa).

Mn(2+) contacts are provided by His-126, Asp-149, His-151, Asp-153, Asp-230, and Asp-232.

Belongs to the arginase family. Agmatinase subfamily. Requires Mn(2+) as cofactor.

The enzyme catalyses agmatine + H2O = urea + putrescine. It participates in amine and polyamine biosynthesis; putrescine biosynthesis via agmatine pathway; putrescine from agmatine: step 1/1. In terms of biological role, catalyzes the formation of putrescine from agmatine. This is Agmatinase from Klebsiella pneumoniae (strain 342).